The sequence spans 342 residues: Probable dual-specificity RNA methyltransferase RlmN (342 aa).

Residue Glu91 is the Proton acceptor of the active site. The 231-residue stretch at 97-327 (YKHGNSICVS…TTIRREMGAD (231 aa)) folds into the Radical SAM core domain. The cysteines at positions 104 and 332 are disulfide-linked. 3 residues coordinate [4Fe-4S] cluster: Cys111, Cys115, and Cys118. Residues 158–159 (GE), Ser190, 213–215 (SLH), and Asn289 contribute to the S-adenosyl-L-methionine site. Residue Cys332 is the S-methylcysteine intermediate of the active site.

This sequence belongs to the radical SAM superfamily. RlmN family. It depends on [4Fe-4S] cluster as a cofactor.

The protein localises to the cytoplasm. The catalysed reaction is adenosine(2503) in 23S rRNA + 2 reduced [2Fe-2S]-[ferredoxin] + 2 S-adenosyl-L-methionine = 2-methyladenosine(2503) in 23S rRNA + 5'-deoxyadenosine + L-methionine + 2 oxidized [2Fe-2S]-[ferredoxin] + S-adenosyl-L-homocysteine. It carries out the reaction adenosine(37) in tRNA + 2 reduced [2Fe-2S]-[ferredoxin] + 2 S-adenosyl-L-methionine = 2-methyladenosine(37) in tRNA + 5'-deoxyadenosine + L-methionine + 2 oxidized [2Fe-2S]-[ferredoxin] + S-adenosyl-L-homocysteine. Specifically methylates position 2 of adenine 2503 in 23S rRNA and position 2 of adenine 37 in tRNAs. This chain is Probable dual-specificity RNA methyltransferase RlmN, found in Clostridium botulinum (strain Loch Maree / Type A3).